Here is a 532-residue protein sequence, read N- to C-terminus: 2,3-bisphosphoglycerate-independent phosphoglycerate mutase (532 aa).

Mn(2+) contacts are provided by Asp-15 and Ser-65. Residue Ser-65 is the Phosphoserine intermediate of the active site. Substrate contacts are provided by residues His-126, 156 to 157, Arg-188, Arg-194, 258 to 261, and Lys-331; these read RD and RPDR. Mn(2+) is bound by residues Asp-398, His-402, Asp-439, His-440, and His-457.

The protein belongs to the BPG-independent phosphoglycerate mutase family. As to quaternary structure, monomer. It depends on Mn(2+) as a cofactor.

It catalyses the reaction (2R)-2-phosphoglycerate = (2R)-3-phosphoglycerate. Its pathway is carbohydrate degradation; glycolysis; pyruvate from D-glyceraldehyde 3-phosphate: step 3/5. In terms of biological role, catalyzes the interconversion of 2-phosphoglycerate and 3-phosphoglycerate. The chain is 2,3-bisphosphoglycerate-independent phosphoglycerate mutase from Microcystis aeruginosa (strain NIES-843 / IAM M-2473).